Consider the following 200-residue polypeptide: MTEKAPEPHVEEDDDELDGKLNYKPPPQKSLKELQEMDKDDESLTKYKKTLLGDGPVVADPTAPNVTVTRLTLVCESAPGPITMDLTGDLEALKKETFVLKEGVEYRVKINFKVNKDIVSGLKYVQHTYRTGVKVDKATFMVGSYGPRPEEYEFLTPIEEAPKGMLARGTYHNKSFFTDDDKHDHLTWEWNLSIKKDWTE.

The disordered stretch occupies residues 1–40; sequence MTEKAPEPHVEEDDDELDGKLNYKPPPQKSLKELQEMDKD. The residue at position 2 (Thr2) is an N-acetylthreonine. The residue at position 20 (Lys20) is an N6-acetyllysine. Tyr23 carries the post-translational modification Phosphotyrosine. Lys24, Lys39, Lys46, Lys101, and Lys123 each carry N6-acetyllysine. Residues 30 to 40 are compositionally biased toward basic and acidic residues; that stretch reads SLKELQEMDKD. Phosphoserine is present on Ser144. Lys174 bears the N6-acetyllysine mark.

Belongs to the Rho GDI family. Interacts with RHOA. Interacts with RAC1. Interacts with RAC2. Interacts with CDC42.

Its subcellular location is the cytoplasm. The protein resides in the cytosol. In terms of biological role, regulates the GDP/GTP exchange reaction of the Rho proteins by inhibiting the dissociation of GDP from them, and the subsequent binding of GTP to them. Regulates reorganization of the actin cytoskeleton mediated by Rho family members. The polypeptide is Rho GDP-dissociation inhibitor 2 (ARHGDIB) (Bos taurus (Bovine)).